Consider the following 393-residue polypeptide: Formate-dependent phosphoribosylglycinamide formyltransferase (393 aa).

N(1)-(5-phospho-beta-D-ribosyl)glycinamide contacts are provided by residues 22 to 23 (EL) and E82. Residues R114, K155, 160-165 (SSGKGQ), 195-198 (EGFI), and E203 each bind ATP. One can recognise an ATP-grasp domain in the interval 119-308 (RLAAEELDLP…QFALHARAIL (190 aa)). Mg(2+) is bound by residues E267 and E279. N(1)-(5-phospho-beta-D-ribosyl)glycinamide is bound by residues D286, K356, and 363–364 (RR).

This sequence belongs to the PurK/PurT family. Homodimer.

The enzyme catalyses N(1)-(5-phospho-beta-D-ribosyl)glycinamide + formate + ATP = N(2)-formyl-N(1)-(5-phospho-beta-D-ribosyl)glycinamide + ADP + phosphate + H(+). Its pathway is purine metabolism; IMP biosynthesis via de novo pathway; N(2)-formyl-N(1)-(5-phospho-D-ribosyl)glycinamide from N(1)-(5-phospho-D-ribosyl)glycinamide (formate route): step 1/1. Functionally, involved in the de novo purine biosynthesis. Catalyzes the transfer of formate to 5-phospho-ribosyl-glycinamide (GAR), producing 5-phospho-ribosyl-N-formylglycinamide (FGAR). Formate is provided by PurU via hydrolysis of 10-formyl-tetrahydrofolate. The chain is Formate-dependent phosphoribosylglycinamide formyltransferase from Pseudomonas fluorescens (strain Pf0-1).